A 121-amino-acid polypeptide reads, in one-letter code: Conopressin-conophysin (121 aa).

The first 20 residues, 1–20, serve as a signal peptide directing secretion; it reads MGRLTMALCWLLLLLLTTQA. A disulfide bridge links C21 with C26. 4-hydroxyproline; partial; in Conopressin-ba1c is present on P27. G29 is subject to Glycine amide. Cystine bridges form between C43–C83, C46–C57, C51–C73, C58–C63, C90–C108, C102–C120, and C109–C114.

The protein belongs to the vasopressin/oxytocin family. In terms of tissue distribution, expressed by the venom duct.

The protein resides in the secreted. The polypeptide is Conopressin-conophysin (Conus bayani (Bayan's cone)).